Reading from the N-terminus, the 197-residue chain is ATP-dependent Clp protease proteolytic subunit (197 aa).

Serine 98 (nucleophile) is an active-site residue. Histidine 123 is an active-site residue.

This sequence belongs to the peptidase S14 family. As to quaternary structure, fourteen ClpP subunits assemble into 2 heptameric rings which stack back to back to give a disk-like structure with a central cavity, resembling the structure of eukaryotic proteasomes.

Its subcellular location is the cytoplasm. The enzyme catalyses Hydrolysis of proteins to small peptides in the presence of ATP and magnesium. alpha-casein is the usual test substrate. In the absence of ATP, only oligopeptides shorter than five residues are hydrolyzed (such as succinyl-Leu-Tyr-|-NHMec, and Leu-Tyr-Leu-|-Tyr-Trp, in which cleavage of the -Tyr-|-Leu- and -Tyr-|-Trp bonds also occurs).. In terms of biological role, cleaves peptides in various proteins in a process that requires ATP hydrolysis. Has a chymotrypsin-like activity. Plays a major role in the degradation of misfolded proteins. The sequence is that of ATP-dependent Clp protease proteolytic subunit from Lysinibacillus sphaericus (strain C3-41).